We begin with the raw amino-acid sequence, 403 residues long: Argininosuccinate synthase (403 aa).

ATP contacts are provided by residues 12–20 (AYSGGLDTS) and alanine 39. Tyrosine 90 and serine 95 together coordinate L-citrulline. Glycine 120 is a binding site for ATP. L-aspartate is bound by residues threonine 122, asparagine 126, and aspartate 127. Asparagine 126 serves as a coordination point for L-citrulline. Positions 130, 182, 191, 267, and 279 each coordinate L-citrulline.

This sequence belongs to the argininosuccinate synthase family. Type 1 subfamily. In terms of assembly, homotetramer.

It is found in the cytoplasm. It carries out the reaction L-citrulline + L-aspartate + ATP = 2-(N(omega)-L-arginino)succinate + AMP + diphosphate + H(+). The protein operates within amino-acid biosynthesis; L-arginine biosynthesis; L-arginine from L-ornithine and carbamoyl phosphate: step 2/3. The protein is Argininosuccinate synthase of Vesicomyosocius okutanii subsp. Calyptogena okutanii (strain HA).